A 434-amino-acid polypeptide reads, in one-letter code: MTVTDIASRTYNHSWRLDPIIRSLLDTDFYKLLMLQMIREDYSNQQVTFSVINRSRHVRLAEIIDEGELRAQLDHARTIRFTKKELIWLAGNTFYGKTHMFSADFIRWLAEFRLPEYELRKVEGQYELHFHGPWTHTTMWEIPALAILNELRSRAAIKGRGRFELDVLYARAKAKLWTKVERLRKLENLRLSDFGTRRRHGFLWQRWCVEAVKEGLGPSFIGTSNVLLAMDNDLEAIGTNAHELPMVAAGLAKDDEELRWAPYRILDQWRQTYGGNLLIALPDAFGTKAFLRDAPEWVADWTGFRPDSAPPIQAGEEIIAWWEKKGRNPRDKLLVFSDAMDVGSIEETYHHFTGRVRLSFGWGTNLTNDFVGCAPDGSFNLDPISLVCKVSSVDGHPAVKLSDNPEKATGLPSEIERYLRVFGDVGRVRKPVLV.

H242 carries the post-translational modification Phosphohistidine; by autocatalysis.

The protein belongs to the NAPRTase family. Transiently phosphorylated on a His residue during the reaction cycle. Phosphorylation strongly increases the affinity for substrates and increases the rate of nicotinate D-ribonucleotide production. Dephosphorylation regenerates the low-affinity form of the enzyme, leading to product release.

It carries out the reaction nicotinate + 5-phospho-alpha-D-ribose 1-diphosphate + ATP + H2O = nicotinate beta-D-ribonucleotide + ADP + phosphate + diphosphate. The protein operates within cofactor biosynthesis; NAD(+) biosynthesis; nicotinate D-ribonucleotide from nicotinate: step 1/1. Its function is as follows. Catalyzes the synthesis of beta-nicotinate D-ribonucleotide from nicotinate and 5-phospho-D-ribose 1-phosphate at the expense of ATP. The sequence is that of Nicotinate phosphoribosyltransferase from Bradyrhizobium diazoefficiens (strain JCM 10833 / BCRC 13528 / IAM 13628 / NBRC 14792 / USDA 110).